Consider the following 129-residue polypeptide: Acyl carrier protein 2, chloroplastic (129 aa).

A chloroplast-targeting transit peptide spans 1–49 (MASAAASAVSFARPVKAICVNSVSFSALRKDNVSFRLQPVPQRFSVCCA). The Carrier domain occupies 52–127 (KETVEKVCDI…DAANLIDSLV (76 aa)). At Ser87 the chain carries O-(pantetheine 4'-phosphoryl)serine.

This sequence belongs to the acyl carrier protein (ACP) family. Post-translationally, 4'-phosphopantetheine is transferred from CoA to a specific serine of apo-ACP by acpS. This modification is essential for activity because fatty acids are bound in thioester linkage to the sulfhydryl of the prosthetic group.

It is found in the plastid. It localises to the chloroplast. The protein operates within lipid metabolism; fatty acid biosynthesis. Functionally, carrier of the growing fatty acid chain in fatty acid biosynthesis. The sequence is that of Acyl carrier protein 2, chloroplastic (ACL1.2) from Hordeum vulgare (Barley).